Consider the following 698-residue polypeptide: Protein arginine N-methyltransferase 7 (698 aa).

SAM-dependent MTase PRMT-type domains are found at residues 14–357 and 366–698; these read QNTW…YSLW and EKPA…EKSE.

It belongs to the class I-like SAM-binding methyltransferase superfamily. Protein arginine N-methyltransferase family. PRMT7 subfamily.

Functionally, essential arginine methyltransferase that can both catalyze the formation of omega-N monomethylarginine (MMA) and symmetrical dimethylarginine (sDMA). Specifically mediates the symmetrical dimethylation of arginine residues in the small nuclear ribonucleoproteins SmD1 and SmD3. This chain is Protein arginine N-methyltransferase 7 (Art7), found in Drosophila mojavensis (Fruit fly).